The following is an 839-amino-acid chain: Protein translocase subunit SecA (839 aa).

Residues Gln85, 103–107 (GEGKT), and Asp493 contribute to the ATP site. Positions 780–790 (QIHEQERERAS) are enriched in basic and acidic residues. The segment at 780 to 839 (QIHEQERERASQRATTAAPQNIQSQQSANTDDLPKVERNEACPCGSGKKFKNCHGRKSFS) is disordered. The span at 791 to 809 (QRATTAAPQNIQSQQSANT) shows a compositional bias: polar residues. Zn(2+) contacts are provided by Cys821, Cys823, Cys832, and His833. Residues 827-839 (KKFKNCHGRKSFS) show a composition bias toward basic residues.

Belongs to the SecA family. Monomer and homodimer. Part of the essential Sec protein translocation apparatus which comprises SecA, SecYEG and auxiliary proteins SecDF. Other proteins may also be involved. Requires Zn(2+) as cofactor.

The protein resides in the cell membrane. Its subcellular location is the cytoplasm. The enzyme catalyses ATP + H2O + cellular proteinSide 1 = ADP + phosphate + cellular proteinSide 2.. Functionally, part of the Sec protein translocase complex. Interacts with the SecYEG preprotein conducting channel. Has a central role in coupling the hydrolysis of ATP to the transfer of proteins into and across the cell membrane, serving as an ATP-driven molecular motor driving the stepwise translocation of polypeptide chains across the membrane. This is Protein translocase subunit SecA from Streptococcus pyogenes serotype M3 (strain ATCC BAA-595 / MGAS315).